The following is a 72-amino-acid chain: Small ribosomal subunit protein bS18 (72 aa).

It belongs to the bacterial ribosomal protein bS18 family. Part of the 30S ribosomal subunit. Forms a tight heterodimer with protein bS6.

In terms of biological role, binds as a heterodimer with protein bS6 to the central domain of the 16S rRNA, where it helps stabilize the platform of the 30S subunit. The chain is Small ribosomal subunit protein bS18 from Trichodesmium erythraeum (strain IMS101).